Consider the following 168-residue polypeptide: Endoribonuclease YbeY (168 aa).

3 residues coordinate Zn(2+): H126, H130, and H136.

This sequence belongs to the endoribonuclease YbeY family. Zn(2+) is required as a cofactor.

It localises to the cytoplasm. Its function is as follows. Single strand-specific metallo-endoribonuclease involved in late-stage 70S ribosome quality control and in maturation of the 3' terminus of the 16S rRNA. The protein is Endoribonuclease YbeY of Sinorhizobium medicae (strain WSM419) (Ensifer medicae).